Here is a 483-residue protein sequence, read N- to C-terminus: 5-hydroxytryptamine receptor 3A (483 aa).

Residues 1–23 (MPLCIPQVLLALFLSVLIAQGEG) form the signal peptide. At 24–246 (SRRRATQAHS…MKFYVVIRRR (223 aa)) the chain is on the extracellular side. 3 N-linked (GlcNAc...) asparagine glycosylation sites follow: asparagine 109, asparagine 175, and asparagine 191. An intrachain disulfide couples cysteine 162 to cysteine 176. A helical membrane pass occupies residues 247–273 (PLFYAVSLLLPSIFLMVVDIVGFCLPP). Over 274 to 278 (DSGER) the chain is Cytoplasmic. The helical transmembrane segment at 279-297 (VSFKITLLLGYSVFLIIVS) threads the bilayer. Topologically, residues 298-307 (DTLPATAIGT) are extracellular. The helical transmembrane segment at 308-326 (PLIGVYFVVCMALLVISLA) threads the bilayer. At 327–460 (ETIFIVQLVH…GYVLDRLLFR (134 aa)) the chain is on the cytoplasmic side. The segment at 393–414 (VGSPQDLEKTSRSRDSPLPPPR) is disordered. The segment covering 398-407 (DLEKTSRSRD) has biased composition (basic and acidic residues). The interval 419–455 (AVRGLLQELSSIRHSLEKRDEMREVARDWLRVGYVLD) is HA-stretch; determines single-channel conductance in 5-HT3 receptors. A helical membrane pass occupies residues 461–480 (IYLLAVLAYSITLVTLWSIW). Over 481-483 (HYS) the chain is Extracellular.

The protein belongs to the ligand-gated ion channel (TC 1.A.9) family. 5-hydroxytryptamine receptor (TC 1.A.9.2) subfamily. HTR3A sub-subfamily. In terms of assembly, forms homopentameric as well as heteropentameric serotonin-activated cation-selective channel complexes with HTR3B or HTR3C or HTR3D or HTR3E. The homomeric complex is functional but exhibits low conductance with modified voltage dependence, and decreased agonist and antagonist affinity. Heteropentameric complexes display properties which resemble that of neuronal serotonin-activated channels in vivo. Interacts with RIC3. In terms of tissue distribution, expressed in central and peripheral neurons.

Its subcellular location is the postsynaptic cell membrane. It localises to the cell membrane. The enzyme catalyses Na(+)(in) = Na(+)(out). It catalyses the reaction K(+)(in) = K(+)(out). It carries out the reaction Ca(2+)(in) = Ca(2+)(out). The catalysed reaction is Mg(2+)(in) = Mg(2+)(out). Forms serotonin (5-hydroxytryptamine/5-HT3)-activated cation-selective channel complexes, which when activated cause fast, depolarizing responses in neurons. The polypeptide is 5-hydroxytryptamine receptor 3A (Rattus norvegicus (Rat)).